A 456-amino-acid polypeptide reads, in one-letter code: Exodeoxyribonuclease 7 large subunit (456 aa).

The protein belongs to the XseA family. Heterooligomer composed of large and small subunits.

It localises to the cytoplasm. The catalysed reaction is Exonucleolytic cleavage in either 5'- to 3'- or 3'- to 5'-direction to yield nucleoside 5'-phosphates.. Functionally, bidirectionally degrades single-stranded DNA into large acid-insoluble oligonucleotides, which are then degraded further into small acid-soluble oligonucleotides. The polypeptide is Exodeoxyribonuclease 7 large subunit (Shigella boydii serotype 4 (strain Sb227)).